A 201-amino-acid chain; its full sequence is Translation initiation factor IF-3 (201 aa).

The protein belongs to the IF-3 family. As to quaternary structure, monomer.

It is found in the cytoplasm. Functionally, IF-3 binds to the 30S ribosomal subunit and shifts the equilibrium between 70S ribosomes and their 50S and 30S subunits in favor of the free subunits, thus enhancing the availability of 30S subunits on which protein synthesis initiation begins. The protein is Translation initiation factor IF-3 of Prochlorococcus marinus (strain SARG / CCMP1375 / SS120).